A 395-amino-acid chain; its full sequence is Flavohemoprotein (395 aa).

Residues 1–136 enclose the Globin domain; the sequence is MLDQQTIATI…LANVFIQRES (136 aa). Residue His85 participates in heme b binding. Residues Tyr95 and Glu135 each act as charge relay system in the active site. Residues 147 to 395 are reductase; sequence GGWHGIRPFR…YECFGPHKVI (249 aa). One can recognise an FAD-binding FR-type domain in the interval 150-255; the sequence is HGIRPFRIVA…AAPHGDFYLE (106 aa). FAD contacts are provided by residues Tyr188 and 204-207; that span reads RQYS. 268–273 lines the NADP(+) pocket; it reads GVGQTP. FAD is bound at residue 388–391; that stretch reads CFGP.

The protein belongs to the globin family. Two-domain flavohemoproteins subfamily. It in the C-terminal section; belongs to the flavoprotein pyridine nucleotide cytochrome reductase family. Heme b is required as a cofactor. Requires FAD as cofactor.

Its subcellular location is the cytoplasm. It catalyses the reaction 2 nitric oxide + NADPH + 2 O2 = 2 nitrate + NADP(+) + H(+). It carries out the reaction 2 nitric oxide + NADH + 2 O2 = 2 nitrate + NAD(+) + H(+). Is involved in NO detoxification in an aerobic process, termed nitric oxide dioxygenase (NOD) reaction that utilizes O(2) and NAD(P)H to convert NO to nitrate, which protects the bacterium from various noxious nitrogen compounds. Therefore, plays a central role in the inducible response to nitrosative stress. The chain is Flavohemoprotein (hmp) from Dickeya dadantii (strain 3937) (Erwinia chrysanthemi (strain 3937)).